The sequence spans 110 residues: Ribonuclease H2 subunit C (110 aa).

The tract at residues 45 to 69 (LKREKSATPSSSDNTTSNTFSNGAI) is disordered. The span at 51-66 (ATPSSSDNTTSNTFSN) shows a compositional bias: low complexity.

This sequence belongs to the RNase H2 subunit C family. Highly divergent. In terms of assembly, the RNase 2 complex is a heterotrimer composed of the catalytic subunit RNH201 and of the non-catalytic subunits RNH202 and RNH203.

It localises to the cytoplasm. It is found in the nucleus. In terms of biological role, non catalytic subunit of RNase H2, an endonuclease that specifically degrades the RNA of RNA:DNA hybrids. Participates in DNA replication, possibly by mediating the removal of lagging-strand Okazaki fragment RNA primers during DNA replication. Mediates the excision of single ribonucleotides from DNA:RNA duplexes. In Saccharomyces cerevisiae (strain ATCC 204508 / S288c) (Baker's yeast), this protein is Ribonuclease H2 subunit C (RNH203).